A 478-amino-acid chain; its full sequence is WD repeat-containing protein AAC3 (478 aa).

Disordered regions lie at residues 33 to 53 (HPLF…QQQQ) and 106 to 140 (SQIH…QYTN). Positions 106 to 125 (SQIHQQSQQSQLSNNLNSNS) are enriched in low complexity. Polar residues predominate over residues 126 to 140 (KESTNIPKTNTQYTN). 7 WD repeats span residues 163-202 (GNKK…NSNN), 226-268 (GHDG…GTVS), 270-307 (NSEN…TLKI), 310-349 (FNGE…TTHV), 357-396 (GHTA…CVKT), 399-438 (KSTF…PIHT), and 440-478 (ECSG…GYHS).

This sequence belongs to the THOC3 family.

This chain is WD repeat-containing protein AAC3 (AAC3), found in Dictyostelium discoideum (Social amoeba).